The sequence spans 420 residues: MAFIAALGLLMAEICPAVICCSDGTLGMHNAVQKGQDTQKQLDSLTLASINTDFAFSFYKELALKNPHKNIAFSPFGIATALNSLTLGAKGNTLEEILEVLKFNLTETSEADIHQGFKHLLQRLSHPGDQVQIRTGNALFVEKHLQILAEFKEKARALYHTEVFTANFQQPHEAMKLINSYMSNQTQGKIKELVSDMDGNTSMVIVNDLFFKAEWMVPFNSDDTFMGKFIVDRSRHVKVPMMKTKNLRTPYFRDEELKCTVVELNYKGNGKAMFILPDQGKMQQVEASLQPGTLKKWRKSLRPRKIKELHLPKFSLSQHYNLEDILPELGIRELFSTQADLSGITGVKNITVSEMIHSTELDMTEKGTEGDAITIVGYNFMSAKLKPVFVKFEDQFLYIVLDQGDLWIHVMGKVINPSEK.

A signal peptide spans 1–17 (MAFIAALGLLMAEICPA). Asparagine 104 and asparagine 349 each carry an N-linked (GlcNAc...) asparagine glycan. The segment at 367–392 (GTEGDAITIVGYNFMSAKLKPVFVKF) is RCL.

This sequence belongs to the serpin family.

It is found in the secreted. The chain is Serine protease inhibitor A3B (Serpina3b) from Mus musculus (Mouse).